The chain runs to 822 residues: Protein SIEVE ELEMENT OCCLUSION A (822 aa).

The segment at 25–62 (PRSAEQRLADNAGERRPLAPRSHEDNPFGGHTDDHHVA) is disordered. Residues 28–62 (AEQRLADNAGERRPLAPRSHEDNPFGGHTDDHHVA) show a composition bias toward basic and acidic residues.

As to quaternary structure, can form homodimer. In terms of tissue distribution, expressed in phloem sieve elements.

Its function is as follows. Scaffold protein required to form the phloem filament matrix in sieve elements. This is Protein SIEVE ELEMENT OCCLUSION A from Arabidopsis thaliana (Mouse-ear cress).